The primary structure comprises 525 residues: Ribonuclease Y (525 aa).

The chain crosses the membrane as a helical span at residues 3–23 (IFFISLVLIVLASVVFFVGGF). The KH domain occupies 215-300 (ALSVVHIQSD…KAYEDAKKEI (86 aa)). The region spanning 341–433 (LLQHSREVAM…VDAANVISLS (93 aa)) is the HD domain.

Belongs to the RNase Y family.

The protein localises to the cell membrane. In terms of biological role, endoribonuclease that initiates mRNA decay. In Chlorobium phaeobacteroides (strain DSM 266 / SMG 266 / 2430), this protein is Ribonuclease Y.